Here is a 511-residue protein sequence, read N- to C-terminus: Cytochrome P450 monooxyhenase eriC (511 aa).

The chain crosses the membrane as a helical span at residues 2–22 (VLADFISIPTVSIACLAVLGI). Residue Cys-445 coordinates heme.

It belongs to the cytochrome P450 family. It depends on heme as a cofactor.

It localises to the membrane. It catalyses the reaction erinacol + reduced [NADPH--hemoprotein reductase] + O2 = cyathadiol + oxidized [NADPH--hemoprotein reductase] + H2O + H(+). Its pathway is secondary metabolite biosynthesis. Functionally, cytochrome P450 monooxygenase; part of the gene cluster that mediates the biosynthesis of erinacines, cyathane-xylosides that show unique biological activities, including leishmanicidal activity, stimulating activity for nerve growth-factor synthesis, and agonistic activity toward the kappa opioid receptor. Within the pathway, eriC hydroxylates erinacol at C-15 of the seven-membered ring to yield cyathadiol. The first step of the erinacines biosynthesis pathway is catalyzed by the geranylgeranyl diphosphate (GGPP) synthase eriE via conversion of farnesyl pyrophosphate and isopentyl pyrophosphate into geranylgeranyl pyrophosphate (GGPP). GGPP is then substrate of the diterpene cyclase eriG for the production of cyatha-3,12-diene. The cytochrome P450 monooxygenase eriI then hydroxylates cyatha-3,12-diene at C-14 of the seven-membered ring to produce erinacol, which is further hydroxylated at C-15 by the cytochrome P450 monooxygenase eriC to yield cyathadiol. The cytochrome P450 monooxygenase eriA then catalyzes C-11 hydroxylation in the presence of the short chain dehydrogenase/reductase (SDR) eriH, which leads to the production of cyathatriol. The acetyltransferase eriL converts cyathatriol into 11-O-acetyl-cyathatriol. The SDR eriH catalyzes further oxidation of 11-O-acetyl-cyathatriol into 1-O-acetylcyathin A3. Finally, the glycosyl transferase eriJ tranfers xylose from UDP-xylose onto C-14 of 11-O-acetyl-cyathatriol to form eracine Q. EriJ is also able to convert 11-O-acetyl-cyathatriol to eracine Q2 by using UDP-D-glucose as cosubstrate, but at a lower rate. The polypeptide is Cytochrome P450 monooxyhenase eriC (Hericium erinaceus (Lion's mane mushroom)).